Consider the following 342-residue polypeptide: Oxygen-dependent coproporphyrinogen-III oxidase (342 aa).

S98 contributes to the substrate binding site. Residues H102 and H112 each contribute to the a divalent metal cation site. The Proton donor role is filled by H112. Position 114–116 (114–116 (NYR)) interacts with substrate. Residues H146 and H176 each contribute to the a divalent metal cation site. The important for dimerization stretch occupies residues 266–301 (YVEFNLVWDRGTIFGLQTNGRTESILMSLPPLARWE).

It belongs to the aerobic coproporphyrinogen-III oxidase family. As to quaternary structure, homodimer. The cofactor is a divalent metal cation.

It is found in the cytoplasm. It catalyses the reaction coproporphyrinogen III + O2 + 2 H(+) = protoporphyrinogen IX + 2 CO2 + 2 H2O. The protein operates within porphyrin-containing compound metabolism; protoporphyrin-IX biosynthesis; protoporphyrinogen-IX from coproporphyrinogen-III (O2 route): step 1/1. In terms of biological role, involved in the heme and chlorophyll biosynthesis. Catalyzes the aerobic oxidative decarboxylation of propionate groups of rings A and B of coproporphyrinogen-III to yield the vinyl groups in protoporphyrinogen-IX. This chain is Oxygen-dependent coproporphyrinogen-III oxidase, found in Prochlorococcus marinus (strain MIT 9312).